Consider the following 179-residue polypeptide: Large ribosomal subunit protein uL5 (179 aa).

Belongs to the universal ribosomal protein uL5 family. Part of the 50S ribosomal subunit; part of the 5S rRNA/L5/L18/L25 subcomplex. Contacts the 5S rRNA and the P site tRNA. Forms a bridge to the 30S subunit in the 70S ribosome.

Its function is as follows. This is one of the proteins that bind and probably mediate the attachment of the 5S RNA into the large ribosomal subunit, where it forms part of the central protuberance. In the 70S ribosome it contacts protein S13 of the 30S subunit (bridge B1b), connecting the 2 subunits; this bridge is implicated in subunit movement. Contacts the P site tRNA; the 5S rRNA and some of its associated proteins might help stabilize positioning of ribosome-bound tRNAs. The protein is Large ribosomal subunit protein uL5 of Buchnera aphidicola subsp. Baizongia pistaciae (strain Bp).